The chain runs to 279 residues: NADPH-dependent 7-cyano-7-deazaguanine reductase (279 aa).

Position 86 to 88 (86 to 88 (IES)) interacts with substrate. 88–89 (SK) serves as a coordination point for NADPH. Cysteine 186 serves as the catalytic Thioimide intermediate. Aspartate 193 functions as the Proton donor in the catalytic mechanism. Residue 225–226 (HE) participates in substrate binding. 254–255 (RG) provides a ligand contact to NADPH.

The protein belongs to the GTP cyclohydrolase I family. QueF type 2 subfamily. In terms of assembly, homodimer.

Its subcellular location is the cytoplasm. It carries out the reaction 7-aminomethyl-7-carbaguanine + 2 NADP(+) = 7-cyano-7-deazaguanine + 2 NADPH + 3 H(+). It functions in the pathway tRNA modification; tRNA-queuosine biosynthesis. Functionally, catalyzes the NADPH-dependent reduction of 7-cyano-7-deazaguanine (preQ0) to 7-aminomethyl-7-deazaguanine (preQ1). The polypeptide is NADPH-dependent 7-cyano-7-deazaguanine reductase (Chromobacterium violaceum (strain ATCC 12472 / DSM 30191 / JCM 1249 / CCUG 213 / NBRC 12614 / NCIMB 9131 / NCTC 9757 / MK)).